The sequence spans 97 residues: Small ribosomal subunit protein bS18c (97 aa).

It belongs to the bacterial ribosomal protein bS18 family. As to quaternary structure, part of the 30S ribosomal subunit.

It is found in the plastid. Its subcellular location is the chloroplast. In Oenothera glazioviana (Large-flowered evening primrose), this protein is Small ribosomal subunit protein bS18c.